We begin with the raw amino-acid sequence, 151 residues long: MSSQPKILLVNGPNLNLLGRREPGHYGHHTLEQIVDDLKQSATQAGIQLDHIQSNAEHLLIEAIHNSDADMVIINPAAFTHTSVALRDALLGVAIPFIEVHLSNVHSREPFRHHSYFSDKAIGVICGLGAQGYQFALQAAIARIHAAEKQG.

Residue Tyr26 is the Proton acceptor of the active site. Substrate-binding residues include Asn75, His81, and Asp88. His101 serves as the catalytic Proton donor. Residues 102 to 103 (LS) and Arg112 each bind substrate.

Belongs to the type-II 3-dehydroquinase family. As to quaternary structure, homododecamer.

The catalysed reaction is 3-dehydroquinate = 3-dehydroshikimate + H2O. It participates in metabolic intermediate biosynthesis; chorismate biosynthesis; chorismate from D-erythrose 4-phosphate and phosphoenolpyruvate: step 3/7. Its function is as follows. Catalyzes a trans-dehydration via an enolate intermediate. This Shewanella halifaxensis (strain HAW-EB4) protein is 3-dehydroquinate dehydratase.